The primary structure comprises 309 residues: Probable 2,4-dienoyl-CoA reductase 3 [(3E)-enoyl-CoA-producing] (309 aa).

Residues 32–37 (GGGTGI), R57, and D83 contribute to the NADP(+) site. Residue R57 coordinates substrate. Substrate-binding residues include F116 and S124. The Proton acceptor role is filled by Y166. NADP(+) is bound by residues K181 and 207–210 (PGPI). R218 contacts substrate.

This sequence belongs to the short-chain dehydrogenases/reductases (SDR) family. 2,4-dienoyl-CoA reductase subfamily.

It catalyses the reaction a (2E,4E)-dienoyl-CoA + NADPH + H(+) = a 4,5-saturated-(3E)-enoyl-CoA + NADP(+). The enzyme catalyses a (2E,4Z)-dienoyl-CoA + NADPH + H(+) = a 4,5-saturated-(3E)-enoyl-CoA + NADP(+). Auxiliary enzyme of beta-oxidation. It participates in the metabolism of unsaturated fatty enoyl-CoA esters having double bonds in both even- and odd-numbered positions. Catalyzes the NADP-dependent reduction of 2,4-dienoyl-CoA to yield trans-3-enoyl-CoA. In Caenorhabditis elegans, this protein is Probable 2,4-dienoyl-CoA reductase 3 [(3E)-enoyl-CoA-producing].